The following is a 232-amino-acid chain: Thiamine import ATP-binding protein ThiQ (232 aa).

Positions leucine 2–isoleucine 230 constitute an ABC transporter domain. Glycine 32 to serine 39 contacts ATP.

The protein belongs to the ABC transporter superfamily. Thiamine importer (TC 3.A.1.19.1) family. In terms of assembly, the complex is composed of two ATP-binding proteins (ThiQ), two transmembrane proteins (ThiP) and a solute-binding protein (ThiB).

Its subcellular location is the cell inner membrane. The catalysed reaction is thiamine(out) + ATP + H2O = thiamine(in) + ADP + phosphate + H(+). Functionally, part of the ABC transporter complex ThiBPQ involved in thiamine import. Responsible for energy coupling to the transport system. The polypeptide is Thiamine import ATP-binding protein ThiQ (Escherichia coli O6:H1 (strain CFT073 / ATCC 700928 / UPEC)).